The chain runs to 394 residues: Proliferation-associated protein 2G4 (394 aa).

Ser2 carries the post-translational modification N-acetylserine. Phosphoserine is present on Ser2. Residues Ser2–Leu48 are necessary for nucleolar localization. The interval Leu46 to Ala54 is RNA-binding. Lys298 is covalently cross-linked (Glycyl lysine isopeptide (Lys-Gly) (interchain with G-Cter in SUMO2)). The tract at residues Leu301–Asp394 is necessary for nucleolar localization. Ser335 is subject to Phosphoserine. The tract at residues Leu358–Asp394 is disordered. At Ser361 the chain carries Phosphoserine; by PKC/PRKCD. An interaction with RNA region spans residues Ser361–Ser375. Residues Lys365 to Ser375 show a composition bias toward basic residues. Residues Thr366 and Thr386 each carry the phosphothreonine modification.

The protein belongs to the peptidase M24 family. Isoform 2 interacts with the cytoplasmic domain of non-phosphorylated ERBB3; the interaction requires PKC activity. Interacts with AR. Treatment with HRG leads to dissociation from ERBB3 and increases association with AR. Interacts with NCL/nucleolin. Component of a ribonucleoprotein complex containing at least PA2G4, NCL, TOP1, PABPC2, RPLP0, acetylated histone H1 (HIST1H1A or H1F1), histone H1 2/4, RPL4, RPL8, RPL15, RPL18, RPL18A, RPL21, RPL11, RPL12, RPL28, RPL27, RPLP2 and RPL24. Interacts with HDAC2. Interacts with RB1; the interaction is enhanced upon PA2G4 dephosphorylation. Interacts with AKT1. Isoform 1 and isoform 2 interact with RNF20. Isoform 2 interacts with HUWE1. Interacts with DNAJC21. Phosphorylated on serine and threonine residues. Phosphorylation is enhanced by HRG treatment. Basal phosphorylation is PKC-dependent and HRG-induced phosphorylation is predominantly PKC-independent. Phosphorylation at Ser-361 by PKC/PRKCD regulates its nucleolar localization. In terms of processing, in cancer cells, isoform 2 is polyubiquitinated leading to its proteasomal degradation and phosphorylation by PKC/PRKCD enhances polyubiquitination. Isoform 2 is undetectable whereas isoform 1 is strongly expressed in cancer cells (at protein level). Isoform 1 and isoform 2 are widely expressed, including heart, brain, lung, pancreas, skeletal muscle, kidney, placenta and liver.

It localises to the cytoplasm. Its subcellular location is the nucleus. The protein resides in the nucleolus. In terms of biological role, may play a role in a ERBB3-regulated signal transduction pathway. Seems be involved in growth regulation. Acts a corepressor of the androgen receptor (AR) and is regulated by the ERBB3 ligand neuregulin-1/heregulin (HRG). Inhibits transcription of some E2F1-regulated promoters, probably by recruiting histone acetylase (HAT) activity. Binds RNA. Associates with 28S, 18S and 5.8S mature rRNAs, several rRNA precursors and probably U3 small nucleolar RNA. May be involved in regulation of intermediate and late steps of rRNA processing. May be involved in ribosome assembly. Mediates cap-independent translation of specific viral IRESs (internal ribosomal entry site). Regulates cell proliferation, differentiation, and survival. Isoform 1 suppresses apoptosis whereas isoform 2 promotes cell differentiation. The polypeptide is Proliferation-associated protein 2G4 (PA2G4) (Homo sapiens (Human)).